The primary structure comprises 247 residues: uncharacterized protein (247 aa).

3 residues coordinate NADP(+): leucine 11, asparagine 85, and lysine 119. The Proton donor role is filled by serine 136. Residues tyrosine 150, lysine 154, valine 181, and threonine 183 each contribute to the NADP(+) site. Tyrosine 150 functions as the Proton acceptor in the catalytic mechanism. The active-site Lowers pKa of active site Tyr is lysine 154.

It belongs to the short-chain dehydrogenases/reductases (SDR) family.

This is an uncharacterized protein from Schizosaccharomyces pombe (strain 972 / ATCC 24843) (Fission yeast).